The primary structure comprises 99 residues: NADH-quinone oxidoreductase subunit K (99 aa).

3 helical membrane-spanning segments follow: residues 3–23, 28–48, and 59–79; these read LVNY…TVLV, IIMF…FVAF, and VVAF…LAII.

Belongs to the complex I subunit 4L family. In terms of assembly, NDH-1 is composed of 14 different subunits. Subunits NuoA, H, J, K, L, M, N constitute the membrane sector of the complex.

The protein resides in the cell membrane. It catalyses the reaction a quinone + NADH + 5 H(+)(in) = a quinol + NAD(+) + 4 H(+)(out). Functionally, NDH-1 shuttles electrons from NADH, via FMN and iron-sulfur (Fe-S) centers, to quinones in the respiratory chain. The immediate electron acceptor for the enzyme in this species is believed to be a menaquinone. Couples the redox reaction to proton translocation (for every two electrons transferred, four hydrogen ions are translocated across the cytoplasmic membrane), and thus conserves the redox energy in a proton gradient. The protein is NADH-quinone oxidoreductase subunit K of Beutenbergia cavernae (strain ATCC BAA-8 / DSM 12333 / CCUG 43141 / JCM 11478 / NBRC 16432 / NCIMB 13614 / HKI 0122).